The following is a 532-amino-acid chain: Glucose-6-phosphate isomerase (532 aa).

Catalysis depends on glutamate 330, which acts as the Proton donor. Active-site residues include histidine 359 and lysine 461.

Belongs to the GPI family.

The protein resides in the cytoplasm. The catalysed reaction is alpha-D-glucose 6-phosphate = beta-D-fructose 6-phosphate. Its pathway is carbohydrate biosynthesis; gluconeogenesis. The protein operates within carbohydrate degradation; glycolysis; D-glyceraldehyde 3-phosphate and glycerone phosphate from D-glucose: step 2/4. Functionally, catalyzes the reversible isomerization of glucose-6-phosphate to fructose-6-phosphate. In Synechococcus sp. (strain CC9605), this protein is Glucose-6-phosphate isomerase.